A 60-amino-acid chain; its full sequence is Ribosome biogenesis protein Nop10 (60 aa).

Positions 37 to 60 (APAPFDPADPHGKYRRALKERRRL) are disordered. Basic residues predominate over residues 49 to 60 (KYRRALKERRRL).

The protein belongs to the NOP10 family.

Involved in ribosome biogenesis; more specifically in 18S rRNA pseudouridylation and in cleavage of pre-rRNA. This chain is Ribosome biogenesis protein Nop10, found in Halobacterium salinarum (strain ATCC 29341 / DSM 671 / R1).